Reading from the N-terminus, the 118-residue chain is MPRVKRGVTARARHKKVLELAKGFRGRRKNVYRIAKQAVMKAGQYAYRDRRNRKRVFRRLWIARINAASRSHGITYSRFIAGIKKAAIDIDRKMLAELAVNDPAAFGSIVEKVKAQLA.

It belongs to the bacterial ribosomal protein bL20 family.

Binds directly to 23S ribosomal RNA and is necessary for the in vitro assembly process of the 50S ribosomal subunit. It is not involved in the protein synthesizing functions of that subunit. This Methylibium petroleiphilum (strain ATCC BAA-1232 / LMG 22953 / PM1) protein is Large ribosomal subunit protein bL20.